Here is a 430-residue protein sequence, read N- to C-terminus: NAD(P)(+) glycohydrolase toxin Tse6 (430 aa).

Helical transmembrane passes span 17-37 (FGVA…AAVV), 46-66 (LAAV…FQIV), and 193-213 (LLLA…IGGL).

As to quaternary structure, interacts with Tsi6, VgrG1a, EagT6 and EF-Tu.

The protein localises to the membrane. The enzyme catalyses NAD(+) + H2O = ADP-D-ribose + nicotinamide + H(+). Type VI secretion exported toxin that acts as a glycohydrolase on bacterial target cells and degrades the essential dinucleotides NAD(+) and NADP(+), thereby inducing bacteriostasis. The activity resides in the C-terminal region that is initially neutralized by the cognate immunity protein Tsi6. This Pseudomonas aeruginosa (strain ATCC 15692 / DSM 22644 / CIP 104116 / JCM 14847 / LMG 12228 / 1C / PRS 101 / PAO1) protein is NAD(P)(+) glycohydrolase toxin Tse6.